Here is a 423-residue protein sequence, read N- to C-terminus: Imidazolonepropionase (423 aa).

Residues histidine 78 and histidine 80 each coordinate Fe(3+). Positions 78 and 80 each coordinate Zn(2+). The 4-imidazolone-5-propanoate site is built by arginine 87, tyrosine 150, and histidine 183. Tyrosine 150 lines the N-formimidoyl-L-glutamate pocket. Histidine 247 contacts Fe(3+). Histidine 247 lines the Zn(2+) pocket. Glutamate 250 contacts 4-imidazolone-5-propanoate. Aspartate 322 is a Fe(3+) binding site. Aspartate 322 contributes to the Zn(2+) binding site. Asparagine 324 and glycine 326 together coordinate N-formimidoyl-L-glutamate. Serine 327 is a binding site for 4-imidazolone-5-propanoate.

It belongs to the metallo-dependent hydrolases superfamily. HutI family. The cofactor is Zn(2+). Fe(3+) is required as a cofactor.

Its subcellular location is the cytoplasm. It catalyses the reaction 4-imidazolone-5-propanoate + H2O = N-formimidoyl-L-glutamate. It participates in amino-acid degradation; L-histidine degradation into L-glutamate; N-formimidoyl-L-glutamate from L-histidine: step 3/3. Its function is as follows. Catalyzes the hydrolytic cleavage of the carbon-nitrogen bond in imidazolone-5-propanoate to yield N-formimidoyl-L-glutamate. It is the third step in the universal histidine degradation pathway. The protein is Imidazolonepropionase of Bacillus thuringiensis (strain Al Hakam).